A 238-amino-acid chain; its full sequence is tRNA (guanine-N(7)-)-methyltransferase (238 aa).

4 residues coordinate S-adenosyl-L-methionine: glutamate 68, glutamate 93, aspartate 120, and aspartate 143. Residue aspartate 143 is part of the active site. Substrate contacts are provided by residues lysine 147, aspartate 179, and 216-219 (TKFE).

This sequence belongs to the class I-like SAM-binding methyltransferase superfamily. TrmB family.

The enzyme catalyses guanosine(46) in tRNA + S-adenosyl-L-methionine = N(7)-methylguanosine(46) in tRNA + S-adenosyl-L-homocysteine. It participates in tRNA modification; N(7)-methylguanine-tRNA biosynthesis. Functionally, catalyzes the formation of N(7)-methylguanine at position 46 (m7G46) in tRNA. This Shewanella sp. (strain W3-18-1) protein is tRNA (guanine-N(7)-)-methyltransferase.